Here is a 701-residue protein sequence, read N- to C-terminus: MTEHGIKWGCEYCTYENWPSAIKCTMCRAPRPSGAIITEEPFKNSTPDVGSMERDIGSPLICPDSSARPRVKSSYSMEPSSKWSCQICTYLNWPRAIRCTQCLSQRRTRSPTESPQSSGSGLRSIPSPIDPCEEYNDRNKLNIKGQHWTCSACTYENCAKAKKCVVCDHPTPNNMDAIELANTDEASSIINEQDRARWRGGCSSSNSQRRSPPTSKRDSDMDFQRIELAGAVGSKEEFELDLKKLKQIKNRMRKTDWLFLNACVGIVEGDLSAVESYKTSGGDIARQLSADEVRLLNRPSAFDVGYTLVHLSIRFQRQDMLAILLTEVSQHAAKCIPAMVCPELTEQIRREIAASVHQRKGDFACYFLTDLVTFTLPADIEDLPPTVQEKLFDEVLDRDVQKELEEESPIINWSLELGTRLDSRLYALWNRTAGDCLLDSVLQATWGIYDKDSVLRKALHDSLHDCSHWFYSRWKEWESWYSQSFGLHFSLREEQWQEDWAFILSLASQPGASLEQTHIFVLAHILRRPIIVYGVKYYKSFRGETLGYTRFQGVYLPLLWEQSFCWKSPIALGYTRGHFSALVAMENDGFDNRGAGANLNTDDDITVTFLPLVDSERKLLHIHFLSAQELGNEDQQEKLLREWMDCCVTEGGVLVAMQKSSRRRNHPLVTQMVEKWLDGYRQIRPCTALSDGEEDEDDEDE.

3 consecutive RanBP2-type zinc fingers follow at residues 3-33 (EHGI…PRPS), 79-108 (PSSK…QRRT), and 143-173 (IKGQ…PTPN). Residues C10, C13, C24, C27, C85, C88, C99, and C102 each contribute to the Zn(2+) site. Residues 108–121 (TRSPTESPQSSGSG) show a composition bias toward polar residues. The segment at 108 to 129 (TRSPTESPQSSGSGLRSIPSPI) is disordered. 4 residues coordinate Zn(2+): C150, C153, C164, and C167. Residues 198-219 (WRGGCSSSNSQRRSPPTSKRDS) are disordered. Residues 202–214 (CSSSNSQRRSPPT) show a composition bias toward polar residues. ANK repeat units lie at residues 253–283 (RKTD…SGGD) and 306–333 (YTLV…QHAA). One can recognise an OTU domain in the interval 425–585 (LYALWNRTAG…RGHFSALVAM (161 aa)). The Nucleophile role is filled by C436. The Proton acceptor role is filled by H578.

It belongs to the peptidase C64 family.

It localises to the cytoplasm. Its subcellular location is the nucleus. It catalyses the reaction Thiol-dependent hydrolysis of ester, thioester, amide, peptide and isopeptide bonds formed by the C-terminal Gly of ubiquitin (a 76-residue protein attached to proteins as an intracellular targeting signal).. Its function is as follows. Ubiquitin thioesterase, which specifically hydrolyzes 'Lys-29'-linked and 'Lys-33'-linked diubiquitin. Also cleaves 'Lys-63'-linked chains, but with 40-fold less efficiency compared to 'Lys-29'-linked ones. Positive regulator of the Wnt signaling pathway that deubiquitinates apc protein, a negative regulator of Wnt-mediated transcription. Acts as a regulator of autophagy by mediating deubiquitination of pik3c3/vps34, thereby promoting autophagosome maturation. Plays a role in the regulation of cell morphology and cytoskeletal organization. Required in the stress fiber dynamics and cell migration. This chain is Ubiquitin thioesterase zranb1-A (zranb1-a), found in Xenopus laevis (African clawed frog).